The sequence spans 289 residues: 33 kDa chaperonin (289 aa).

Cystine bridges form between C229/C231 and C262/C265.

The protein belongs to the HSP33 family. Under oxidizing conditions two disulfide bonds are formed involving the reactive cysteines. Under reducing conditions zinc is bound to the reactive cysteines and the protein is inactive.

The protein resides in the cytoplasm. Its function is as follows. Redox regulated molecular chaperone. Protects both thermally unfolding and oxidatively damaged proteins from irreversible aggregation. Plays an important role in the bacterial defense system toward oxidative stress. In Pectobacterium carotovorum subsp. carotovorum (strain PC1), this protein is 33 kDa chaperonin.